Here is a 396-residue protein sequence, read N- to C-terminus: Inositol polyphosphate 1-phosphatase (396 aa).

Position 54 (Asp54) interacts with Li(+). Glu79 contacts Mg(2+). Residue Glu80 coordinates Li(+). Asp153 and Ile155 together coordinate Mg(2+). Residues Asp156, Ser157, Thr158, Ser264, Lys266, Gly286, Ala287, Lys290, and Thr308 each coordinate 1D-myo-inositol 1,4-bisphosphate. Asp313 contributes to the Mg(2+) binding site. Residue Ser314 is modified to Phosphoserine.

The protein belongs to the inositol monophosphatase superfamily. As to quaternary structure, monomer. Requires Mg(2+) as cofactor.

It carries out the reaction 1D-myo-inositol 1,4-bisphosphate + H2O = 1D-myo-inositol 4-phosphate + phosphate. The catalysed reaction is 1D-myo-inositol 1,3,4-trisphosphate + H2O = 1D-myo-inositol 3,4-bisphosphate + phosphate. Its pathway is signal transduction; phosphatidylinositol signaling pathway. Its activity is regulated as follows. Inhibited by Li(+). Mg(2+)-dependent phosphatase that catalyzes the hydrolysis of the 1-position phosphate from inositol 1,4-bisphosphate and inositol 1,3,4-trisphosphate and participates in inositol phosphate metabolism. The polypeptide is Inositol polyphosphate 1-phosphatase (Mus musculus (Mouse)).